The chain runs to 200 residues: Holliday junction branch migration complex subunit RuvA (200 aa).

The interval 1 to 63 (MIASVRGEVL…EDSMTLYGFP (63 aa)) is domain I. Residues 64-142 (DSESKELFGL…AVGSTSGAVP (79 aa)) are domain II. Residues 142–146 (PLGAG) are flexible linker. A domain III region spans residues 147–200 (GGGSVRDQIVEALVGLGFPAKQAEQATDSVLAEAPESTTSSALRSALSLLGKTR).

The protein belongs to the RuvA family. In terms of assembly, homotetramer. Forms an RuvA(8)-RuvB(12)-Holliday junction (HJ) complex. HJ DNA is sandwiched between 2 RuvA tetramers; dsDNA enters through RuvA and exits via RuvB. An RuvB hexamer assembles on each DNA strand where it exits the tetramer. Each RuvB hexamer is contacted by two RuvA subunits (via domain III) on 2 adjacent RuvB subunits; this complex drives branch migration. In the full resolvosome a probable DNA-RuvA(4)-RuvB(12)-RuvC(2) complex forms which resolves the HJ.

The protein resides in the cytoplasm. The RuvA-RuvB-RuvC complex processes Holliday junction (HJ) DNA during genetic recombination and DNA repair, while the RuvA-RuvB complex plays an important role in the rescue of blocked DNA replication forks via replication fork reversal (RFR). RuvA specifically binds to HJ cruciform DNA, conferring on it an open structure. The RuvB hexamer acts as an ATP-dependent pump, pulling dsDNA into and through the RuvAB complex. HJ branch migration allows RuvC to scan DNA until it finds its consensus sequence, where it cleaves and resolves the cruciform DNA. The sequence is that of Holliday junction branch migration complex subunit RuvA from Rhodococcus opacus (strain B4).